The primary structure comprises 467 residues: H(+)/Cl(-) exchange transporter ClcA (467 aa).

At 1–30 (MTKRERIIQSVLVKVPKDAINQFLSHGSTP) the chain is on the cytoplasmic side. The helical transmembrane segment at 31–67 (ISVLFLAALVGVLAGLVGTYFEIAVHFVSETRTEWLK) threads the bilayer. The Periplasmic portion of the chain corresponds to 68 to 74 (SEIGHLL). Residues 75 to 98 (PLWLAAILISAALAFVGYFLVHRF) traverse the membrane as a helical segment. Positions 104–108 (GSGIP) match the Selectivity filter part_1 motif. Position 105 (Ser-105) interacts with chloride. An intramembrane region (helical) is located at residues 107–114 (IPEIEGAM). Over 115–121 (DNIRPVR) the chain is Cytoplasmic. 2 helical membrane-spanning segments follow: residues 122 to 139 (WWRVIPVKFFGGMGALGS) and 146 to 164 (EGPTVQMGGAVGRMVTDIF). Positions 144 to 148 (GREGP) match the Selectivity filter part_2 motif. Topologically, residues 165 to 174 (RVKDDDTRHS) are cytoplasmic. Intramembrane regions (helical) lie at residues 175 to 187 (LLASGAAGGLAAA) and 191 to 199 (PLAGIMFVV). The Cytoplasmic segment spans residues 200-212 (EEMRPQFRYSLIS). The helical transmembrane segment at 213-230 (IRAVIISAVMANIVFRAI) threads the bilayer. The Periplasmic portion of the chain corresponds to 231–250 (NGQDAVITMPQYQPPELKAL). Residues 251 to 279 (WLFLLLGGLFGVFGVLFNKLVTVAQDAFV) traverse the membrane as a helical segment. Topologically, residues 280–285 (ALHKND) are cytoplasmic. Residues 286-307 (RKRYLITGTCLGGIFGLLLLYV) traverse the membrane as a helical segment. At 308 to 327 (PELTGGGIHLIPDVTNGNYS) the chain is on the periplasmic side. Transmembrane regions (helical) follow at residues 328 to 347 (VSLLVMLFVGRVLTTLICFG) and 353 to 374 (GIFAPMLALGTLFGYAFGATAK). Positions 353–357 (GIFAP) match the Selectivity filter part_3 motif. Ile-354 and Phe-355 together coordinate chloride. At 375-384 (ILLPDLPIEP) the chain is on the periplasmic side. The segment at residues 385-399 (GMFAIAGMGALFAAT) is an intramembrane region (helical). The note=Loop between two helices intramembrane region spans 400-402 (VRA). An intramembrane region (helical) is located at residues 403-414 (PITGILLVIEMT). Residues 415–419 (NNYYL) constitute an intramembrane region (note=Loop between two helices). A helical membrane pass occupies residues 420-436 (ILPLIITSLGAVICAQI). At 437–467 (CGGKPIYSQLLHRTIKNDKLRQQDLPEQQNS) the chain is on the cytoplasmic side. Tyr-443 contacts chloride.

The protein belongs to the chloride channel (TC 2.A.49) family. ClcA subfamily. In terms of assembly, homodimer.

The protein resides in the cell inner membrane. The enzyme catalyses 2 chloride(in) + H(+)(out) = 2 chloride(out) + H(+)(in). In terms of biological role, proton-coupled chloride transporter. Functions as antiport system and exchanges two chloride ions for 1 proton. Probably acts as an electrical shunt for an outwardly-directed proton pump that is linked to amino acid decarboxylation, as part of the extreme acid resistance (XAR) response. The sequence is that of H(+)/Cl(-) exchange transporter ClcA from Vibrio vulnificus (strain CMCP6).